The following is a 452-amino-acid chain: Enolase (452 aa).

Gln167 is a binding site for (2R)-2-phosphoglycerate. The Proton donor role is filled by Glu209. The Mg(2+) site is built by Asp250, Glu307, and Asp334. The (2R)-2-phosphoglycerate site is built by Lys359, Arg388, Ser389, and Lys410. The active-site Proton acceptor is the Lys359.

It belongs to the enolase family. Mg(2+) is required as a cofactor.

The protein resides in the cytoplasm. The protein localises to the secreted. Its subcellular location is the cell surface. The catalysed reaction is (2R)-2-phosphoglycerate = phosphoenolpyruvate + H2O. Its pathway is carbohydrate degradation; glycolysis; pyruvate from D-glyceraldehyde 3-phosphate: step 4/5. Functionally, catalyzes the reversible conversion of 2-phosphoglycerate (2-PG) into phosphoenolpyruvate (PEP). It is essential for the degradation of carbohydrates via glycolysis. In Mesomycoplasma hyopneumoniae (strain 7448) (Mycoplasma hyopneumoniae), this protein is Enolase.